Reading from the N-terminus, the 766-residue chain is Lanosterol synthase ERG7 (766 aa).

The disordered stretch occupies residues 1-47; it reads MVANSTGRDASALKSRKRAADSESEPLLKQGQPFPKQPRIGSELDKT. One copy of the PFTB 1 repeat lies at 148–190; the sequence is ATAIYNYISARAHPEDGGWGLHIEGESSVFGTLMNYVALRLVG. Aspartate 482 acts as the Proton donor in catalysis. PFTB repeat units lie at residues 586 to 626 and 635 to 676; these read IRTA…KHIG and SRRG…VVQT.

It belongs to the terpene cyclase/mutase family.

Its subcellular location is the lipid droplet. It is found in the endoplasmic reticulum membrane. It carries out the reaction (S)-2,3-epoxysqualene = lanosterol. Its pathway is terpene metabolism; lanosterol biosynthesis; lanosterol from farnesyl diphosphate: step 3/3. The protein operates within steroid metabolism; ergosterol biosynthesis. Lanosterol synthase; part of the third module of ergosterol biosynthesis pathway that includes the late steps of the pathway. ERG7 catalyzes the cyclization of (S)-2,3 oxidosqualene to lanosterol, a reaction that forms the sterol core. The third module or late pathway involves the ergosterol synthesis itself through consecutive reactions that mainly occur in the endoplasmic reticulum (ER) membrane. Firstly, the squalene synthase ERG9 catalyzes the condensation of 2 farnesyl pyrophosphate moieties to form squalene, which is the precursor of all steroids. Squalene synthase is crucial for balancing the incorporation of farnesyl diphosphate (FPP) into sterol and nonsterol isoprene synthesis. Secondly, squalene is converted into lanosterol by the consecutive action of the squalene epoxidase ERG1 and the lanosterol synthase ERG7. Then, the delta(24)-sterol C-methyltransferase ERG6 methylates lanosterol at C-24 to produce eburicol. Eburicol is the substrate of the sterol 14-alpha demethylase encoded by CYP51A, CYP51B and CYP51C, to yield 4,4,24-trimethyl ergosta-8,14,24(28)-trienol. CYP51B encodes the enzyme primarily responsible for sterol 14-alpha-demethylation, and plays an essential role in ascospore formation. CYP51A encodes an additional sterol 14-alpha-demethylase, induced on ergosterol depletion and responsible for the intrinsic variation in azole sensitivity. The third CYP51 isoform, CYP51C, does not encode a sterol 14-alpha-demethylase, but is required for full virulence on host wheat ears. The C-14 reductase ERG24 then reduces the C14=C15 double bond which leads to 4,4-dimethylfecosterol. A sequence of further demethylations at C-4, involving the C-4 demethylation complex containing the C-4 methylsterol oxidases ERG25, the sterol-4-alpha-carboxylate 3-dehydrogenase ERG26 and the 3-keto-steroid reductase ERG27, leads to the production of fecosterol via 4-methylfecosterol. ERG28 has a role as a scaffold to help anchor ERG25, ERG26 and ERG27 to the endoplasmic reticulum. The C-8 sterol isomerase ERG2 then catalyzes the reaction which results in unsaturation at C-7 in the B ring of sterols and thus converts fecosterol to episterol. The sterol-C5-desaturases ERG3A and ERG3BB then catalyze the introduction of a C-5 double bond in the B ring to produce 5-dehydroepisterol. The C-22 sterol desaturases ERG5A and ERG5B further convert 5-dehydroepisterol into ergosta-5,7,22,24(28)-tetraen-3beta-ol by forming the C-22(23) double bond in the sterol side chain. Finally, ergosta-5,7,22,24(28)-tetraen-3beta-ol is substrate of the C-24(28) sterol reductase ERG4 to produce ergosterol. This is Lanosterol synthase ERG7 from Gibberella zeae (strain ATCC MYA-4620 / CBS 123657 / FGSC 9075 / NRRL 31084 / PH-1) (Wheat head blight fungus).